Here is a 213-residue protein sequence, read N- to C-terminus: Phosphatidylcholine transfer protein (213 aa).

Position 1 is an N-acetylmethionine (Met-1). One can recognise an START domain in the interval 1-212; the sequence is MDPGAGAFSE…MVKACQNYKK (212 aa). Residues Tyr-72 and Arg-78 each contribute to the a 1,2-diacyl-sn-glycero-3-phosphocholine site. Ser-139 is subject to Phosphoserine. Gln-157 contributes to the a 1,2-diacyl-sn-glycero-3-phosphocholine binding site. The tract at residues 171–176 is part of the binding site for phosphatidylcholine; the sequence is VFMYYF.

In terms of assembly, interacts with ACOT13/THEM2.

The protein localises to the cytoplasm. In terms of biological role, catalyzes the transfer of phosphatidylcholine between membranes. Binds phosphatidylcholine in a tight 1:1 stoichiometric complex. The chain is Phosphatidylcholine transfer protein (PCTP) from Bos taurus (Bovine).